The primary structure comprises 412 residues: Transforming growth factor beta-3 proprotein (412 aa).

An N-terminal signal peptide occupies residues 1 to 23 (MKMHLQRALVVLALLNLATVSLS). N-linked (GlcNAc...) asparagine glycans are attached at residues Asn-74, Asn-135, and Asn-142. The short motif at 261 to 263 (RGD) is the Cell attachment site element. Gln-293 carries the post-translational modification N5-methylglutamine. 4 cysteine pairs are disulfide-bonded: Cys-307–Cys-316, Cys-315–Cys-378, Cys-344–Cys-409, and Cys-348–Cys-411.

It belongs to the TGF-beta family. As to quaternary structure, interacts with ASPN. Latency-associated peptide: Homodimer; disulfide-linked. Latency-associated peptide: Interacts with Transforming growth factor beta-3 (TGF-beta-3) chain; interaction is non-covalent and maintains (TGF-beta-3) in a latent state. Latency-associated peptide: Interacts with LRRC32/GARP; leading to regulate activation of TGF-beta-3 and promote epithelial fusion during palate development. Latency-associated peptide: Interacts (via cell attachment site) with integrins, leading to release of the active TGF-beta-3. Transforming growth factor beta-3: Homodimer; disulfide-linked. Transforming growth factor beta-3: Interacts with TGF-beta receptors (TGFBR1 and TGFBR2), leading to signal transduction. Post-translationally, transforming growth factor beta-3 proprotein: The precursor proprotein is cleaved in the Golgi apparatus to form Transforming growth factor beta-3 (TGF-beta-3) and Latency-associated peptide (LAP) chains, which remain non-covalently linked, rendering TGF-beta-3 inactive. In terms of processing, methylated at Gln-293 by N6AMT1. Expressed in cardiomyocytes.

It localises to the secreted. The protein localises to the extracellular space. It is found in the extracellular matrix. Transforming growth factor beta-3 proprotein: Precursor of the Latency-associated peptide (LAP) and Transforming growth factor beta-3 (TGF-beta-3) chains, which constitute the regulatory and active subunit of TGF-beta-3, respectively. In terms of biological role, required to maintain the Transforming growth factor beta-3 (TGF-beta-3) chain in a latent state during storage in extracellular matrix. Associates non-covalently with TGF-beta-3 and regulates its activation via interaction with 'milieu molecules', such as LTBP1 and LRRC32/GARP, that control activation of TGF-beta-3. Interaction with integrins results in distortion of the Latency-associated peptide chain and subsequent release of the active TGF-beta-3. Functionally, transforming growth factor beta-3: Multifunctional protein that regulates embryogenesis and cell differentiation and is required in various processes such as secondary palate development. Activation into mature form follows different steps: following cleavage of the proprotein in the Golgi apparatus, Latency-associated peptide (LAP) and Transforming growth factor beta-3 (TGF-beta-3) chains remain non-covalently linked rendering TGF-beta-3 inactive during storage in extracellular matrix. At the same time, LAP chain interacts with 'milieu molecules', such as LTBP1 and LRRC32/GARP that control activation of TGF-beta-3 and maintain it in a latent state during storage in extracellular milieus. TGF-beta-3 is released from LAP by integrins: integrin-binding results in distortion of the LAP chain and subsequent release of the active TGF-beta-3. Once activated following release of LAP, TGF-beta-3 acts by binding to TGF-beta receptors (TGFBR1 and TGFBR2), which transduce signal. In Rattus norvegicus (Rat), this protein is Transforming growth factor beta-3 proprotein (Tgfb3).